The sequence spans 128 residues: Small ribosomal subunit protein uS11 (128 aa).

This sequence belongs to the universal ribosomal protein uS11 family. As to quaternary structure, part of the 30S ribosomal subunit. Interacts with proteins S7 and S18. Binds to IF-3.

Its function is as follows. Located on the platform of the 30S subunit, it bridges several disparate RNA helices of the 16S rRNA. Forms part of the Shine-Dalgarno cleft in the 70S ribosome. The protein is Small ribosomal subunit protein uS11 of Desulfatibacillum aliphaticivorans.